The following is a 78-amino-acid chain: Large ribosomal subunit protein bL28 (78 aa).

This sequence belongs to the bacterial ribosomal protein bL28 family.

The protein is Large ribosomal subunit protein bL28 of Psychrobacter arcticus (strain DSM 17307 / VKM B-2377 / 273-4).